Here is a 382-residue protein sequence, read N- to C-terminus: S-adenosylmethionine synthase (382 aa).

Residue Glu-10 coordinates Mg(2+). An ATP-binding site is contributed by His-16. K(+) is bound at residue Glu-44. 2 residues coordinate L-methionine: Glu-57 and Gln-100. ATP contacts are provided by residues 166–168 (DTK), 234–237 (SGRF), Asp-245, 251–252 (RK), Ala-268, Lys-272, and Lys-276. Asp-245 serves as a coordination point for L-methionine. Lys-276 contributes to the L-methionine binding site.

The protein belongs to the AdoMet synthase family. Requires Mg(2+) as cofactor. The cofactor is K(+).

The catalysed reaction is L-methionine + ATP + H2O = S-adenosyl-L-methionine + phosphate + diphosphate. It functions in the pathway amino-acid biosynthesis; S-adenosyl-L-methionine biosynthesis; S-adenosyl-L-methionine from L-methionine: step 1/1. Its function is as follows. Catalyzes the formation of S-adenosylmethionine from methionine and ATP. The reaction comprises two steps that are both catalyzed by the same enzyme: formation of S-adenosylmethionine (AdoMet) and triphosphate, and subsequent hydrolysis of the triphosphate. The polypeptide is S-adenosylmethionine synthase (sam1) (Schizosaccharomyces pombe (strain 972 / ATCC 24843) (Fission yeast)).